The primary structure comprises 311 residues: Aspartate carbamoyltransferase catalytic subunit (311 aa).

Carbamoyl phosphate is bound by residues arginine 55 and threonine 56. Lysine 85 is an L-aspartate binding site. The carbamoyl phosphate site is built by arginine 106, histidine 135, and glutamine 138. Residues arginine 168 and arginine 230 each contribute to the L-aspartate site. Carbamoyl phosphate-binding residues include leucine 268 and proline 269.

Belongs to the aspartate/ornithine carbamoyltransferase superfamily. ATCase family. As to quaternary structure, heterododecamer (2C3:3R2) of six catalytic PyrB chains organized as two trimers (C3), and six regulatory PyrI chains organized as three dimers (R2).

It catalyses the reaction carbamoyl phosphate + L-aspartate = N-carbamoyl-L-aspartate + phosphate + H(+). Its pathway is pyrimidine metabolism; UMP biosynthesis via de novo pathway; (S)-dihydroorotate from bicarbonate: step 2/3. Its function is as follows. Catalyzes the condensation of carbamoyl phosphate and aspartate to form carbamoyl aspartate and inorganic phosphate, the committed step in the de novo pyrimidine nucleotide biosynthesis pathway. This chain is Aspartate carbamoyltransferase catalytic subunit, found in Serratia proteamaculans (strain 568).